A 123-amino-acid polypeptide reads, in one-letter code: Prostate stem cell antigen (123 aa).

The signal sequence occupies residues 1 to 20 (MKTVFFLLLATYLALHPGAA). The region spanning 21–95 (LQCYSCTAQM…CCYSDLCNVN (75 aa)) is the UPAR/Ly6 domain. Cystine bridges form between Cys-23–Cys-48, Cys-26–Cys-35, Cys-41–Cys-66, Cys-70–Cys-86, and Cys-87–Cys-92. Asn-40 is a glycosylation site (N-linked (GlcNAc...) asparagine). Asn-95 carries GPI-anchor amidated asparagine lipidation. Positions 96-123 (GAHTLKPPTTLGLLTVLCSLLLWGSSRL) are cleaved as a propeptide — removed in mature form.

Interacts with CHRNA4. In terms of tissue distribution, predominantly expressed in prostate. Also found in spleen, liver, lung, prostate, kidney and testis. Expressed in brain cortex; expression is increased in transgenic mouse model of Alzheimer disease (at protein level).

The protein resides in the cell membrane. May be involved in the regulation of cell proliferation. Its function is as follows. May act as a modulator of nicotinic acetylcholine receptors (nAChRs) activity. In vitro inhibits nicotine-induced signaling probably implicating alpha-3:beta-2- or alpha-7-containing nAChRs. In Mus musculus (Mouse), this protein is Prostate stem cell antigen (Psca).